The sequence spans 342 residues: Phosphate acyltransferase (342 aa).

The protein belongs to the PlsX family. In terms of assembly, homodimer. Probably interacts with PlsY.

The protein resides in the cytoplasm. It carries out the reaction a fatty acyl-[ACP] + phosphate = an acyl phosphate + holo-[ACP]. It participates in lipid metabolism; phospholipid metabolism. Its function is as follows. Catalyzes the reversible formation of acyl-phosphate (acyl-PO(4)) from acyl-[acyl-carrier-protein] (acyl-ACP). This enzyme utilizes acyl-ACP as fatty acyl donor, but not acyl-CoA. The sequence is that of Phosphate acyltransferase from Shewanella sediminis (strain HAW-EB3).